The following is a 126-amino-acid chain: Large ribosomal subunit protein bL17 (126 aa).

It belongs to the bacterial ribosomal protein bL17 family. Part of the 50S ribosomal subunit. Contacts protein L32.

This Xylella fastidiosa (strain 9a5c) protein is Large ribosomal subunit protein bL17.